We begin with the raw amino-acid sequence, 139 residues long: uncharacterized protein (139 aa).

The interval 83-109 is disordered; it reads LIPPKKTSPATSSSLKPPRRPRGCLNG. A compositionally biased stretch (low complexity) spans 86 to 98; sequence PKKTSPATSSSLK.

This sequence to M.pneumoniae MPN_091 and MPN_463.

This is an uncharacterized protein from Mycoplasma pneumoniae (strain ATCC 29342 / M129 / Subtype 1) (Mycoplasmoides pneumoniae).